The chain runs to 1217 residues: Disease resistance protein RPS4 (1217 aa).

Residues P14–L175 form the TIR domain. E88 is an active-site residue. In terms of domain architecture, NB-ARC spans E211–E472. LRR repeat units lie at residues H260–E285, P436–D459, L614–P636, I637–T659, A682–M706, M708–L728, I729–S749, D750–R774, L796–I818, S819–Y842, and L861–C887. Residues T1162–T1195 are disordered. Positions K1170 to M1177 match the Nuclear localization signal motif.

In terms of assembly, interacts with EDS1.

The protein resides in the nucleus. It carries out the reaction NAD(+) + H2O = ADP-D-ribose + nicotinamide + H(+). Its function is as follows. Disease resistance (R) protein that specifically recognizes the AvrRps4 type III effector avirulence protein from Pseudomonas syringae. Resistance proteins guard the plant against pathogens that contain an appropriate avirulence protein via an indirect interaction with this avirulence protein. That triggers a defense system including the hypersensitive response, which restricts the pathogen growth. The combined presence of both regular and alternative RPS4 transcripts with truncated open reading frames (ORFs) is necessary for function. RPS4 function is regulated at multiple levels, including gene expression, alternative splicing, and protein stability. Acts as a disease resistance protein involved in resistance to fungal and bacterial pathogens, including R.solanacearum, P.syringae pv. tomato and C.higginsianum. In presence of RRS1, elicites an EDS1-dependent hypersensitive response. The chain is Disease resistance protein RPS4 from Arabidopsis thaliana (Mouse-ear cress).